The chain runs to 265 residues: Small ribosomal subunit protein uS3 (265 aa).

One can recognise a KH type-2 domain in the interval 43-111; the sequence is IRTMLKTSLD…QIQLNILEVK (69 aa). The disordered stretch occupies residues 217–265; that stretch reads AREQANQKSSRPERRNDRSDGRTGDRRTNAPRTAPAAEAAPVAAAGVEA. The span at 226–244 shows a compositional bias: basic and acidic residues; that stretch reads SRPERRNDRSDGRTGDRRT. Residues 250–265 are compositionally biased toward low complexity; that stretch reads APAAEAAPVAAAGVEA.

It belongs to the universal ribosomal protein uS3 family. As to quaternary structure, part of the 30S ribosomal subunit. Forms a tight complex with proteins S10 and S14.

Functionally, binds the lower part of the 30S subunit head. Binds mRNA in the 70S ribosome, positioning it for translation. This is Small ribosomal subunit protein uS3 from Clavibacter michiganensis subsp. michiganensis (strain NCPPB 382).